The following is a 162-amino-acid chain: Proepiregulin (162 aa).

The signal sequence occupies residues 1-22 (METLPASWVLTLLCLGSHLLQA). Residues 23 to 55 (VISTTVIPSCIPGESEDNCTALVQMEDDPRVAQ) constitute a propeptide that is removed on maturation. Residue Asn-40 is glycosylated (N-linked (GlcNAc...) asparagine). At 53–112 (VAQVQITKCSSDMDGYCLHGQCIYLVDMREKFCRCEVGYTGLRCEHFFLTVHQPLSKEYV) the chain is on the extracellular side. The EGF-like domain occupies 57–97 (QITKCSSDMDGYCLHGQCIYLVDMREKFCRCEVGYTGLRCE). 3 disulfide bridges follow: Cys-61-Cys-74, Cys-69-Cys-85, and Cys-87-Cys-96. Residues 102–162 (TVHQPLSKEY…TSGDPVLPQV (61 aa)) constitute a propeptide, removed in mature form. Residues 113-133 (ALTVILIFLFLIITAGCIYYF) traverse the membrane as a helical segment. Topologically, residues 134-162 (CRWYKNRKSKKSREEYERVTSGDPVLPQV) are cytoplasmic.

In terms of assembly, interacts with EGFR and ERBB4.

It is found in the secreted. The protein localises to the extracellular space. It localises to the cell membrane. Ligand of the EGF receptor/EGFR and ERBB4. Stimulates EGFR and ERBB4 tyrosine phosphorylation. Contributes to inflammation, wound healing, tissue repair, and oocyte maturation by regulating angiogenesis and vascular remodeling and by stimulating cell proliferation. The protein is Proepiregulin (Ereg) of Mus musculus (Mouse).